The chain runs to 136 residues: MARTKQTARKSTGGKAPRKQLATKAARKSAPATGGVKKPHRYRPGTVTLREIRRYQKSTELLIRKLPFQRLVREIAQDFKTDLRFQSSAVMALQEASEAYLVGLFEDTNLCAIHAKRVTIMPKDIQLARRIRGERA.

Residues 1–45 (MARTKQTARKSTGGKAPRKQLATKAARKSAPATGGVKKPHRYRPG) are disordered. Position 3 is an asymmetric dimethylarginine; by PRMT6; alternate (arginine 3). A Citrulline; alternate modification is found at arginine 3. Threonine 4 bears the Phosphothreonine; by HASPIN and VRK1 mark. At lysine 5 the chain carries Allysine; alternate. Lysine 5 is modified (N6,N6,N6-trimethyllysine; alternate). An N6,N6-dimethyllysine; alternate modification is found at lysine 5. Lysine 5 carries the post-translational modification N6-(2-hydroxyisobutyryl)lysine; alternate. The residue at position 5 (lysine 5) is an N6-(beta-hydroxybutyryl)lysine; alternate. Lysine 5 bears the N6-acetyllysine; alternate mark. At lysine 5 the chain carries N6-crotonyllysine; alternate. N6-methyllysine; alternate is present on lysine 5. The residue at position 6 (glutamine 6) is a 5-glutamyl dopamine; alternate. Glutamine 6 is modified (5-glutamyl serotonin; alternate). Threonine 7 bears the Phosphothreonine; by PKC mark. Residue arginine 9 is modified to Citrulline; alternate. Arginine 9 carries the symmetric dimethylarginine; by PRMT5; alternate modification. Lysine 10 is subject to N6,N6,N6-trimethyllysine; alternate. At lysine 10 the chain carries N6,N6-dimethyllysine; alternate. The residue at position 10 (lysine 10) is an N6-(2-hydroxyisobutyryl)lysine; alternate. The residue at position 10 (lysine 10) is an N6-(beta-hydroxybutyryl)lysine; alternate. Lysine 10 carries the N6-acetyllysine; alternate modification. Lysine 10 carries the post-translational modification N6-crotonyllysine; alternate. The residue at position 10 (lysine 10) is an N6-methyllysine; alternate. N6-lactoyllysine; alternate is present on lysine 10. Serine 11 carries the ADP-ribosylserine; alternate modification. Serine 11 carries the post-translational modification Phosphoserine; alternate; by AURKB, AURKC, RPS6KA3, RPS6KA4 and RPS6KA5. Residue threonine 12 is modified to Phosphothreonine; by PKC. Residue lysine 15 is modified to N6-(2-hydroxyisobutyryl)lysine; alternate. Lysine 15 is modified (N6-(beta-hydroxybutyryl)lysine; alternate). At lysine 15 the chain carries N6-acetyllysine; alternate. Lysine 15 carries the N6-lactoyllysine; alternate modification. Lysine 15 carries the N6-glutaryllysine; alternate modification. Residue lysine 15 is modified to N6-succinyllysine; alternate. Citrulline; alternate is present on arginine 18. At arginine 18 the chain carries Asymmetric dimethylarginine; by CARM1; alternate. Lysine 19 and lysine 24 each carry N6-(2-hydroxyisobutyryl)lysine; alternate. Residues lysine 19 and lysine 24 each carry the N6-(beta-hydroxybutyryl)lysine; alternate modification. Residues lysine 19 and lysine 24 each carry the N6-acetyllysine; alternate modification. Lysine 19 and lysine 24 each carry N6-crotonyllysine; alternate. Lysine 19 and lysine 24 each carry N6-methyllysine; alternate. N6-lactoyllysine; alternate is present on residues lysine 19 and lysine 24. Lysine 19 and lysine 24 each carry N6-glutaryllysine; alternate. Lysine 19 and lysine 24 each carry N6-butyryllysine; alternate. Residue lysine 19 is the site of N6-decanoyllysine attachment. Arginine 27 is modified (citrulline). Lysine 28 bears the N6,N6,N6-trimethyllysine; alternate mark. Lysine 28 carries the N6,N6-dimethyllysine; alternate modification. At lysine 28 the chain carries N6-(2-hydroxyisobutyryl)lysine; alternate. Lysine 28 is subject to N6-acetyllysine; alternate. An N6-crotonyllysine; alternate modification is found at lysine 28. Lysine 28 is modified (N6-methyllysine; alternate). Lysine 28 is subject to N6-lactoyllysine; alternate. Lysine 28 is modified (N6-glutaryllysine; alternate). Serine 29 is modified (ADP-ribosylserine; alternate). A Phosphoserine; alternate; by AURKB, AURKC and RPS6KA5 modification is found at serine 29. Position 37 is an N6,N6,N6-trimethyllysine; alternate (lysine 37). Lysine 37 is subject to N6,N6-dimethyllysine; alternate. Lysine 37 carries the post-translational modification N6-(2-hydroxyisobutyryl)lysine; alternate. Lysine 37 carries the post-translational modification N6-acetyllysine; alternate. N6-methyllysine; alternate is present on lysine 37. Lysine 38 is modified (N6-methyllysine). The residue at position 42 (tyrosine 42) is a Phosphotyrosine. At lysine 57 the chain carries N6,N6,N6-trimethyllysine; alternate. Lysine 57 is subject to N6-(2-hydroxyisobutyryl)lysine; alternate. Lysine 57 carries the N6-(beta-hydroxybutyryl)lysine; alternate modification. Position 57 is an N6-acetyllysine; alternate (lysine 57). Residue lysine 57 is modified to N6-crotonyllysine; alternate. Position 57 is an N6-lactoyllysine; alternate (lysine 57). The residue at position 57 (lysine 57) is an N6-glutaryllysine; alternate. Lysine 57 is modified (N6-succinyllysine; alternate). Lysine 57 carries the post-translational modification N6-methyllysine; by EHMT2; alternate. Serine 58 is subject to Phosphoserine. N6-(2-hydroxyisobutyryl)lysine; alternate is present on residues lysine 65 and lysine 80. N6-methyllysine; alternate is present on residues lysine 65 and lysine 80. The residue at position 80 (lysine 80) is an N6,N6,N6-trimethyllysine; alternate. Lysine 80 carries the post-translational modification N6,N6-dimethyllysine; alternate. The residue at position 80 (lysine 80) is an N6-acetyllysine; alternate. Lysine 80 is modified (N6-lactoyllysine; alternate). The residue at position 80 (lysine 80) is an N6-glutaryllysine; alternate. An N6-succinyllysine; alternate modification is found at lysine 80. Phosphothreonine is present on threonine 81. Serine 87 bears the Phosphoserine mark. Position 108 is a phosphothreonine (threonine 108). Cysteine 111 carries the S-palmitoyl cysteine lipid modification. 2 positions are modified to N6-acetyllysine; alternate: lysine 116 and lysine 123. An N6-glutaryllysine; alternate mark is found at lysine 116 and lysine 123. Lysine 123 is modified (N6-(2-hydroxyisobutyryl)lysine; alternate). N6-methyllysine; alternate is present on lysine 123. An N6-succinyllysine; alternate modification is found at lysine 123.

The protein belongs to the histone H3 family. The nucleosome is a histone octamer containing two molecules each of H2A, H2B, H3 and H4 assembled in one H3-H4 heterotetramer and two H2A-H2B heterodimers. The octamer wraps approximately 147 bp of DNA. During nucleosome assembly the chaperone ASF1A interacts with the histone H3-H4 heterodimer (via C-terminus of H3); this interaction is direct. Interacts with DNAJC9, CHAF1A and CHAF1B. Interacts with NASP; NASP is a histone chaperone that stabilizes and maintains a soluble pool of Histone H3-H4 dimers. In terms of processing, acetylation is generally linked to gene activation. Acetylation on Lys-10 (H3K9ac) impairs methylation at Arg-9 (H3R8me2s). Acetylation on Lys-19 (H3K18ac) and Lys-24 (H3K24ac) favors methylation at Arg-18 (H3R17me). Acetylation at Lys-123 (H3K122ac) by EP300/p300 plays a central role in chromatin structure: localizes at the surface of the histone octamer and stimulates transcription, possibly by promoting nucleosome instability. Post-translationally, citrullination at Arg-9 (H3R8ci) and/or Arg-18 (H3R17ci) by PADI4 impairs methylation and represses transcription. Asymmetric dimethylation at Arg-18 (H3R17me2a) by CARM1 is linked to gene activation. Symmetric dimethylation at Arg-9 (H3R8me2s) by PRMT5 is linked to gene repression. Asymmetric dimethylation at Arg-3 (H3R2me2a) by PRMT6 is linked to gene repression and is mutually exclusive with H3 Lys-5 methylation (H3K4me2 and H3K4me3). H3R2me2a is present at the 3' of genes regardless of their transcription state and is enriched on inactive promoters, while it is absent on active promoters. In terms of processing, methylation at Lys-5 (H3K4me), Lys-37 (H3K36me) and Lys-80 (H3K79me) are linked to gene activation. Methylation at Lys-5 (H3K4me) facilitates subsequent acetylation of H3 and H4. Methylation at Lys-80 (H3K79me) is associated with DNA double-strand break (DSB) responses and is a specific target for TP53BP1. Methylation at Lys-10 (H3K9me) and Lys-28 (H3K27me) are linked to gene repression. Methylation at Lys-10 (H3K9me) is a specific target for HP1 proteins (CBX1, CBX3 and CBX5) and prevents subsequent phosphorylation at Ser-11 (H3S10ph) and acetylation of H3 and H4. Methylation at Lys-5 (H3K4me) and Lys-80 (H3K79me) require preliminary monoubiquitination of H2B at 'Lys-120'. Methylation at Lys-10 (H3K9me) and Lys-28 (H3K27me) are enriched in inactive X chromosome chromatin. Monomethylation at Lys-57 (H3K56me1) by EHMT2/G9A in G1 phase promotes interaction with PCNA and is required for DNA replication. Post-translationally, phosphorylated at Thr-4 (H3T3ph) by VRK1. Phosphorylated at Thr-4 (H3T3ph) by HASPIN during prophase and dephosphorylated during anaphase. Phosphorylation at Ser-11 (H3S10ph) by AURKB is crucial for chromosome condensation and cell-cycle progression during mitosis and meiosis. In addition phosphorylation at Ser-11 (H3S10ph) by RPS6KA4 and RPS6KA5 is important during interphase because it enables the transcription of genes following external stimulation, like mitogens, stress, growth factors or UV irradiation and result in the activation of genes, such as c-fos and c-jun. Phosphorylation at Ser-11 (H3S10ph), which is linked to gene activation, prevents methylation at Lys-10 (H3K9me) but facilitates acetylation of H3 and H4. Phosphorylation at Ser-11 (H3S10ph) by AURKB mediates the dissociation of HP1 proteins (CBX1, CBX3 and CBX5) from heterochromatin. Phosphorylation at Ser-11 (H3S10ph) is also an essential regulatory mechanism for neoplastic cell transformation. Phosphorylated at Ser-29 (H3S28ph) by MAP3K20 isoform 1, RPS6KA5 or AURKB during mitosis or upon ultraviolet B irradiation. Phosphorylation at Thr-7 (H3T6ph) by PRKCB is a specific tag for epigenetic transcriptional activation that prevents demethylation of Lys-5 (H3K4me) by LSD1/KDM1A. At centromeres, specifically phosphorylated at Thr-12 (H3T11ph) from prophase to early anaphase, by DAPK3 and PKN1. Phosphorylation at Thr-12 (H3T11ph) by PKN1 or isoform M2 of PKM (PKM2) is a specific tag for epigenetic transcriptional activation that promotes demethylation of Lys-10 (H3K9me) by KDM4C/JMJD2C. Phosphorylation at Tyr-42 (H3Y41ph) by JAK2 promotes exclusion of CBX5 (HP1 alpha) from chromatin. Monoubiquitinated by RAG1 in lymphoid cells, monoubiquitination is required for V(D)J recombination. Ubiquitinated by the CUL4-DDB-RBX1 complex in response to ultraviolet irradiation. This may weaken the interaction between histones and DNA and facilitate DNA accessibility to repair proteins. In terms of processing, lysine deamination at Lys-5 (H3K4all) to form allysine is mediated by LOXL2. Allysine formation by LOXL2 only takes place on H3K4me3 and results in gene repression. Post-translationally, crotonylation (Kcr) is specifically present in male germ cells and marks testis-specific genes in post-meiotic cells, including X-linked genes that escape sex chromosome inactivation in haploid cells. Crotonylation marks active promoters and enhancers and confers resistance to transcriptional repressors. It is also associated with post-meiotically activated genes on autosomes. Butyrylation of histones marks active promoters and competes with histone acetylation. It is present during late spermatogenesis. In terms of processing, succinylation at Lys-80 (H3K79succ) by KAT2A takes place with a maximum frequency around the transcription start sites of genes. It gives a specific tag for epigenetic transcription activation. Desuccinylation at Lys-123 (H3K122succ) by SIRT7 in response to DNA damage promotes chromatin condensation and double-strand breaks (DSBs) repair. Post-translationally, serine ADP-ribosylation by PARP1 or PARP2 constitutes the primary form of ADP-ribosylation of proteins in response to DNA damage. Serine ADP-ribosylation at Ser-11 (H3S10ADPr) promotes recruitment of CHD1L. H3S10ADPr is mutually exclusive with phosphorylation at Ser-11 (H3S10ph) and impairs acetylation at Lys-10 (H3K9ac). Serotonylated by TGM2 at Gln-6 (H3Q5ser) during serotonergic neuron differentiation. H3Q5ser is associated with trimethylation of Lys-5 (H3K4me3) and enhances general transcription factor IID (TFIID) complex-binding to H3K4me3, thereby facilitating transcription. In terms of processing, dopaminylated by TGM2 at Gln-6 (H3Q5dop) in ventral tegmental area (VTA) neurons. H3Q5dop mediates neurotransmission-independent role of nuclear dopamine by regulating relapse-related transcriptional plasticity in the reward system. Post-translationally, lactylated in macrophages by EP300/P300 by using lactoyl-CoA directly derived from endogenous or exogenous lactate, leading to stimulates gene transcription.

It localises to the nucleus. The protein localises to the chromosome. Its function is as follows. Core component of nucleosome. Nucleosomes wrap and compact DNA into chromatin, limiting DNA accessibility to the cellular machineries which require DNA as a template. Histones thereby play a central role in transcription regulation, DNA repair, DNA replication and chromosomal stability. DNA accessibility is regulated via a complex set of post-translational modifications of histones, also called histone code, and nucleosome remodeling. This is Histone H3.2 from Cricetulus longicaudatus (Long-tailed dwarf hamster).